A 450-amino-acid polypeptide reads, in one-letter code: Glucose-6-phosphate isomerase (450 aa).

Glu-291 (proton donor) is an active-site residue. Catalysis depends on residues His-312 and Lys-426.

Belongs to the GPI family.

It is found in the cytoplasm. It catalyses the reaction alpha-D-glucose 6-phosphate = beta-D-fructose 6-phosphate. Its pathway is carbohydrate biosynthesis; gluconeogenesis. It functions in the pathway carbohydrate degradation; glycolysis; D-glyceraldehyde 3-phosphate and glycerone phosphate from D-glucose: step 2/4. Catalyzes the reversible isomerization of glucose-6-phosphate to fructose-6-phosphate. In Clostridium botulinum (strain Langeland / NCTC 10281 / Type F), this protein is Glucose-6-phosphate isomerase.